The chain runs to 371 residues: Probable palmitoyltransferase ZDHHC11B (371 aa).

Transmembrane regions (helical) follow at residues 43–63 (VVTW…FIPL) and 70–90 (YIAY…HLIA). Positions 125–175 (QFCHLCKVTVNKKTKHCISCNKCVSGFDHHCKWINNCVGSRNYWFFFSTVA) constitute a DHHC domain. The S-palmitoyl cysteine intermediate role is filled by Cys155. 3 consecutive transmembrane segments (helical) span residues 177–197 (ATAG…QYLV), 216–236 (TWLL…VVII), and 239–259 (LVLL…IFHI). Residues 335-371 (DGDSKAQEADDAPSTSTLGLQQETTEPMKTDSAESED) are disordered. Over residues 347–359 (PSTSTLGLQQETT) the composition is skewed to polar residues. A compositionally biased stretch (basic and acidic residues) spans 360–371 (EPMKTDSAESED).

The protein belongs to the DHHC palmitoyltransferase family.

The protein localises to the membrane. It catalyses the reaction L-cysteinyl-[protein] + hexadecanoyl-CoA = S-hexadecanoyl-L-cysteinyl-[protein] + CoA. In terms of biological role, probable palmitoyltransferase that could catalyze the addition of palmitate onto various protein substrates and be involved in a variety of cellular processes. May play a role in cell proliferation. In Homo sapiens (Human), this protein is Probable palmitoyltransferase ZDHHC11B.